The sequence spans 212 residues: Fe/S biogenesis protein NfuA (212 aa).

[4Fe-4S] cluster is bound by residues Cys169 and Cys172.

This sequence belongs to the NfuA family. As to quaternary structure, homodimer. [4Fe-4S] cluster serves as cofactor.

Functionally, involved in iron-sulfur cluster biogenesis. Binds a 4Fe-4S cluster, can transfer this cluster to apoproteins, and thereby intervenes in the maturation of Fe/S proteins. Could also act as a scaffold/chaperone for damaged Fe/S proteins. This chain is Fe/S biogenesis protein NfuA, found in Acinetobacter baumannii (strain SDF).